The chain runs to 100 residues: UPF0473 protein Lm4b_01511 (100 aa).

The protein belongs to the UPF0473 family.

This chain is UPF0473 protein Lm4b_01511, found in Listeria monocytogenes serotype 4b (strain CLIP80459).